Here is a 347-residue protein sequence, read N- to C-terminus: 3-keto-steroid reductase ERG27 (347 aa).

NADP(+)-binding residues include L15, T38, and R44. Residues S179 and Y202 each act as proton donor in the active site. Residues Y202, K206, and S237 each coordinate NADP(+). K206 acts as the Lowers pKa of active site Tyr in catalysis. The residue at position 345 (T345) is a Phosphothreonine.

It belongs to the short-chain dehydrogenases/reductases (SDR) family. ERG27 subfamily. As to quaternary structure, heterotetramer of ERG25, ERG26, ERG27 and ERG28. ERG28 acts as a scaffold to tether ERG27 and other 4,4-demethylation-related enzymes, forming a demethylation enzyme complex, in the endoplasmic reticulum. Interacts with ERG25 and ERG28. Also interacts with ERG7, but only in lipid particles.

Its subcellular location is the endoplasmic reticulum membrane. The protein resides in the lipid droplet. The enzyme catalyses 3-dehydro-4alpha-methylzymosterol + NADPH + H(+) = 4alpha-methylzymosterol + NADP(+). It functions in the pathway steroid biosynthesis; zymosterol biosynthesis; zymosterol from lanosterol: step 5/6. 3-keto-steroid reductase; part of the third module of ergosterol biosynthesis pathway that includes the late steps of the pathway. ERG27 is a catalytic component of the C-4 demethylation complex that catalyze the reduction of the keto group on the C-3. The third module or late pathway involves the ergosterol synthesis itself through consecutive reactions that mainly occur in the endoplasmic reticulum (ER) membrane. Firstly, the squalene synthase ERG9 catalyzes the condensation of 2 farnesyl pyrophosphate moieties to form squalene, which is the precursor of all steroids. Squalene synthase is crucial for balancing the incorporation of farnesyl diphosphate (FPP) into sterol and nonsterol isoprene synthesis. Secondly, the squalene epoxidase ERG1 catalyzes the stereospecific oxidation of squalene to (S)-2,3-epoxysqualene, which is considered to be a rate-limiting enzyme in steroid biosynthesis. Then, the lanosterol synthase ERG7 catalyzes the cyclization of (S)-2,3 oxidosqualene to lanosterol, a reaction that forms the sterol core. In the next steps, lanosterol is transformed to zymosterol through a complex process involving various demethylation, reduction and desaturation reactions. The lanosterol 14-alpha-demethylase ERG11 (also known as CYP51) catalyzes C14-demethylation of lanosterol to produce 4,4'-dimethyl cholesta-8,14,24-triene-3-beta-ol, which is critical for ergosterol biosynthesis. The C-14 reductase ERG24 reduces the C14=C15 double bond of 4,4-dimethyl-cholesta-8,14,24-trienol to produce 4,4-dimethyl-cholesta-8,24-dienol. 4,4-dimethyl-cholesta-8,24-dienol is substrate of the C-4 demethylation complex ERG25-ERG26-ERG27 in which ERG25 catalyzes the three-step monooxygenation required for the demethylation of 4,4-dimethyl and 4alpha-methylsterols, ERG26 catalyzes the oxidative decarboxylation that results in a reduction of the 3-beta-hydroxy group at the C-3 carbon to an oxo group, and ERG27 is responsible for the reduction of the keto group on the C-3. ERG28 has a role as a scaffold to help anchor ERG25, ERG26 and ERG27 to the endoplasmic reticulum and ERG29 regulates the activity of the iron-containing C4-methylsterol oxidase ERG25. Then, the sterol 24-C-methyltransferase ERG6 catalyzes the methyl transfer from S-adenosyl-methionine to the C-24 of zymosterol to form fecosterol. The C-8 sterol isomerase ERG2 catalyzes the reaction which results in unsaturation at C-7 in the B ring of sterols and thus converts fecosterol to episterol. The sterol-C5-desaturase ERG3 then catalyzes the introduction of a C-5 double bond in the B ring to produce 5-dehydroepisterol. The C-22 sterol desaturase ERG5 further converts 5-dehydroepisterol into ergosta-5,7,22,24(28)-tetraen-3beta-ol by forming the C-22(23) double bond in the sterol side chain. Finally, ergosta-5,7,22,24(28)-tetraen-3beta-ol is substrate of the C-24(28) sterol reductase ERG4 to produce ergosterol. Its function is as follows. Facilitates the association of ERG7 with lipid particles preventing its digestion in the endoplasmic reticulum and the lipid particles. This Saccharomyces cerevisiae (strain ATCC 204508 / S288c) (Baker's yeast) protein is 3-keto-steroid reductase ERG27.